The chain runs to 180 residues: uncharacterized protein (180 aa).

The interval 138–180 is disordered; it reads SVMPVPMPQQNSDNGSTPHIVDSSKSKDKSSNDGDNGVFTGDE. The segment covering 145–154 has biased composition (polar residues); it reads PQQNSDNGST. Over residues 159-169 the composition is skewed to basic and acidic residues; sequence DSSKSKDKSSN.

This is an uncharacterized protein from Acidianus filamentous virus 2 (isolate Italy/Pozzuoli) (AFV-2).